Consider the following 469-residue polypeptide: MRCIHELADVFINDSDERILTQSLDATEIDKHADYESFFSINSDESIMKARPWKSNAKYFKKTYISSLALCKMSVHAKSGGAIEVMGMMTGKIIKNSIIVMDVYPLPVEGTETRVNAQAEGYEYMVQYLENSKQVGRDENIVGWYHSHPGYGCWLSGIDVATQSLNQNFQDPYLAIVIDPMKTEDQGKVEIGAFRTFPDNYKSPDSAAPTNNTRGVPPSKQKDFGVHSDKYYSLDIQIFKSNLDTEILNIISNKSWIGKLIKSVNTANHQEQNMIENVFKLINKLQKKEVNQLNRFEISFIKKFDLIFEDIISKKLMNDNRFYSTISQSSYDSFSGHGNSSSNDEMDDESDLDDRDKSSAPLDISDTGNDDVMSMESSVNVYTDKRGDDNDDDDDNDGYDKRPMYTNYRSRANLTKPRKSGSSPEEHVKLSNNVNKTITNISNHSKDIGLTELQDLIALKTKESIFLGK.

The 138-residue stretch at 63 to 200 (TYISSLALCK…IGAFRTFPDN (138 aa)) folds into the MPN domain. Residues H146, H148, and D159 each contribute to the Zn(2+) site. A JAMM motif motif is present at residues 146–159 (HSHPGYGCWLSGID). Disordered stretches follow at residues 201-220 (YKSPDSAAPTNNTRGVPPSK) and 331-404 (YDSF…KRPM). Residues 344 to 353 (DEMDDESDLD) are compositionally biased toward acidic residues.

This sequence belongs to the peptidase M67A family. CSN5 subfamily. Component of the COP9 signalosome (CSN) complex.

The protein resides in the cytoplasm. The protein localises to the nucleus. Catalytic Component of the COP9 signalosome (CSN) complex that acts as an regulator of the ubiquitin (Ubl) conjugation pathway by mediating the deneddylation of the cullin subunit of SCF-type E3 ubiquitin-protein ligase complexes. The CSN complex is involved in the regulation of the mating pheromone response. The polypeptide is COP9 signalosome complex subunit 5 (RRI1) (Debaryomyces hansenii (strain ATCC 36239 / CBS 767 / BCRC 21394 / JCM 1990 / NBRC 0083 / IGC 2968) (Yeast)).